The sequence spans 280 residues: Phosphonates import ATP-binding protein PhnC (280 aa).

Residues 4-239 enclose the ABC transporter domain; the sequence is ITVTNLHKSY…VIDDIYGNIQ (236 aa). Residue 36–43 participates in ATP binding; sequence GESGAGKS. The disordered stretch occupies residues 246–280; sequence GDDANADVAPTTSSDGGTDAAGGPDQQPASDPHLS.

It belongs to the ABC transporter superfamily. Phosphonates importer (TC 3.A.1.9.1) family. In terms of assembly, the complex is composed of two ATP-binding proteins (PhnC), two transmembrane proteins (PhnE) and a solute-binding protein (PhnD).

It is found in the cell membrane. The enzyme catalyses phosphonate(out) + ATP + H2O = phosphonate(in) + ADP + phosphate + H(+). Its function is as follows. Part of the ABC transporter complex PhnCDE involved in phosphonates import. Responsible for energy coupling to the transport system. The polypeptide is Phosphonates import ATP-binding protein PhnC (Halobacterium salinarum (strain ATCC 700922 / JCM 11081 / NRC-1) (Halobacterium halobium)).